We begin with the raw amino-acid sequence, 596 residues long: Endoribonuclease ZC3H12A (596 aa).

2 disordered regions span residues 1–48 (MSDP…TSEL) and 97–134 (QALTAPSPQPPLVPRGGSTPKPSTLEPSLPEEDREGSD). Positions 10–19 (VQESNPTMSL) are enriched in polar residues. Residues 42 to 87 (EAPTSELQMKVDFFRKLGYSSSEIHSVLQKLGVQADTNTVLGELVK) form a ubiquitin association domain region. Positions 81-150 (VLGELVKHGS…DGSNVAMSHG (70 aa)) are necessary for interaction with TANK. The interval 112-281 (GGSTPKPSTL…DKFMPPDDPL (170 aa)) is RNase. The RNase NYN domain occupies 135–290 (LRPVVIDGSN…LGRHGPSLDN (156 aa)). The segment at 214–220 (RRVGGKR) is RNA binding. Asp-226 provides a ligand contact to Mg(2+). 2 disordered regions span residues 278–306 (DDPLGRHGPSLDNFLRKKPLPSEHRKQPC) and 340–417 (NALL…PTEW). A C3H1-type zinc finger spans residues 301 to 324 (HRKQPCPYGKKCTYGIKCRFFHPE). Positions 301–454 (HRKQPCPYGK…SELWGVRGGS (154 aa)) are necessary for interaction with ZC3H12D. Ser-344 carries the phosphoserine modification. Residues 356–368 (QRPSPASQSSSVS) are compositionally biased toward low complexity. 2 positions are modified to phosphoserine: Ser-435 and Ser-439. Positions 511–543 (YWSEPYPLPPPTPVLQEPQRPSPGAGGGPWGRV) are disordered. Over residues 524 to 533 (VLQEPQRPSP) the composition is skewed to low complexity.

Belongs to the ZC3H12 family. Oligomer. Found in a deubiquitination complex with TANK, USP10 and ZC3H12A; this complex inhibits genotoxic stress- or interleukin-1-beta-mediated NF-kappaB activation by promoting IKBKG or TRAF6 deubiquitination. Interacts with IKBKG; this interaction increases in response to DNA damage. Interacts with TANK; this interaction increases in response to DNA damage and serves as a bridge to anchor both TANK and USP10 into a deubiquitinating complex. Interacts with TRAF6; this interaction increases in response to DNA damage and is stimulated by TANK. Interacts with USP10; this interaction increases in response to DNA damage and serves as a bridge to anchor both TANK and USP10 into a deubiquitinating complex. Interacts with ZC3H12D. Interacts with TNRC6A. Interacts with IKBKB/IKKB. Interacts with IKBKB/IKKB. Interacts with IKBKB/IKKB. Interacts with BTRC; the interaction occurs when ZC3H12A is phosphorylated in a IKBKB/IKKB-dependent manner. Interacts with IRAK1; this interaction increases the interaction between ZC3H12A and IKBKB/IKKB. Interacts with UPF1; this interaction occurs in a mRNA translationally active- and termination-dependent manner and is essential for ZC3H12A-mediated degradation of target mRNAs. Associates with ribosomes. Interacts with ubiquitin. It depends on Mg(2+) as a cofactor. In terms of processing, proteolytically cleaved between Arg-111 and Arg-214 by MALT1 in activated T-cells; cleavage at Arg-111 is critical for promoting ZC3H12A degradation in response to T-cell receptor (TCR) stimulation, and hence is necessary for prolonging the stability of a set of mRNAs controlling T-cell activation and Th17 cell differentiation. Post-translationally, phosphorylated by IRAK1; phosphorylation is necessary for subsequent phosphorylation by the I-kappa-B-kinase (IKK) complex. Phosphorylated by I-kappa-B-kinases (IKKs) at Ser-435 and Ser-439 upon lipopolysaccharide (LPS) or IL1B stimulation in macrophages through the MyD88-dependent signaling pathway; these phosphorylations promote rapid ubiquitin proteasome-mediated degradation of ZC3H12A in macrophages and hence allows its target mRNAs, such as IL6, to escape from degradation and accumulate during the inflammatory response. Ubiquitinated; ubiquitination is induced in response to interleukin IL1 receptor stimuli in a IKBKB/IKKB and IRAK1-dependent manner, leading to proteasome-mediated degradation. As to expression, expressed in CD4(+) helper T-cells (at protein level). Highly expressed in macrophages. Expressed in lung, lymph nodes, spleen and thymus. Expressed weakly in heart. Expressed weakly in cardiomyocytes (at protein level). Expressed in spleen, lung, intestine, brown adipose tissue and thymus. Weakly expressed in the heart. Weakly expressed in cardiomyocytes.

It is found in the nucleus. Its subcellular location is the cytoplasm. The protein localises to the rough endoplasmic reticulum membrane. It localises to the cytoplasmic granule. The protein resides in the P-body. Its function is as follows. Endoribonuclease involved in various biological functions such as cellular inflammatory response and immune homeostasis, glial differentiation of neuroprogenitor cells, cell death of cardiomyocytes, adipogenesis and angiogenesis. Functions as an endoribonuclease involved in mRNA decay. Modulates the inflammatory response by promoting the degradation of a set of translationally active cytokine-induced inflammation-related mRNAs, such as IL6 and IL12B, during the early phase of inflammation. Prevents aberrant T-cell-mediated immune reaction by degradation of multiple mRNAs controlling T-cell activation, such as those encoding cytokines (IL6 and IL2), cell surface receptors (ICOS, TNFRSF4 and TNFR2) and transcription factor (REL). Inhibits cooperatively with ZC3H12A the differentiation of helper T cells Th17 in lungs. They repress target mRNA encoding the Th17 cell-promoting factors IL6, ICOS, REL, IRF4, NFKBID and NFKBIZ. The cooperation requires RNA-binding by RC3H1 and the nuclease activity of ZC3H12A. Together with RC3H1, destabilizes TNFRSF4/OX40 mRNA by binding to the conserved stem loop structure in its 3'UTR. Self regulates by destabilizing its own mRNA. Cleaves mRNA harboring a stem-loop (SL), often located in their 3'-UTRs, during the early phase of inflammation in a helicase UPF1-dependent manner. Plays a role in the inhibition of microRNAs (miRNAs) biogenesis. Cleaves the terminal loop of a set of precursor miRNAs (pre-miRNAs) important for the regulation of the inflammatory response leading to their degradation, and thus preventing the biosynthesis of mature miRNAs. Also plays a role in promoting angiogenesis in response to inflammatory cytokines by inhibiting the production of antiangiogenic microRNAs via its anti-dicer RNase activity. Affects the overall ubiquitination of cellular proteins. Positively regulates deubiquitinase activity promoting the cleavage at 'Lys-48'- and 'Lys-63'-linked polyubiquitin chains on TNF receptor-associated factors (TRAFs), preventing JNK and NF-kappa-B signaling pathway activation, and hence negatively regulating macrophage-mediated inflammatory response and immune homeostasis. Induces also deubiquitination of the transcription factor HIF1A, probably leading to its stabilization and nuclear import, thereby positively regulating the expression of proangiogenic HIF1A-targeted genes. Involved in a TANK-dependent negative feedback response to attenuate NF-kappaB activation through the deubiquitination of IKBKG or TRAF6 in response to interleukin-1-beta (IL1B) stimulation or upon DNA damage. Prevents stress granules (SGs) formation and promotes macrophage apoptosis under stress conditions, including arsenite-induced oxidative stress, heat shock, and energy deprivation. Plays a role in the regulation of macrophage polarization; promotes IL4-induced polarization of macrophages M1 into anti-inflammatory M2 state. May also act as a transcription factor that regulates the expression of multiple genes involved in inflammatory response, angiogenesis, adipogenesis and apoptosis. Functions as a positive regulator of glial differentiation of neuroprogenitor cells through an amyloid precursor protein (APP)-dependent signaling pathway. Attenuates septic myocardial contractile dysfunction in response to lipopolysaccharide (LPS) by reducing I-kappa-B-kinase (IKK)-mediated NF-kappa-B activation, and hence myocardial pro-inflammatory cytokine production. The polypeptide is Endoribonuclease ZC3H12A (Mus musculus (Mouse)).